We begin with the raw amino-acid sequence, 83 residues long: Kunitz-type serine protease inhibitor tigerin-1 (83 aa).

The N-terminal stretch at 1–24 is a signal peptide; it reads MSSGGLLLLLGLLTLWAELTPVSS. The BPTI/Kunitz inhibitor domain maps to 31 to 81; the sequence is CELPADSGPCRGILHAFYYHPVHRTCLEFIYGGCYGNANNFKTIDECKRTC. Cystine bridges form between Cys-31-Cys-81, Cys-40-Cys-64, and Cys-56-Cys-77.

It belongs to the venom Kunitz-type family. In terms of tissue distribution, expressed by the venom gland.

The protein resides in the secreted. Serine protease inhibitor. This chain is Kunitz-type serine protease inhibitor tigerin-1, found in Notechis scutatus scutatus (Mainland tiger snake).